The sequence spans 228 residues: CMRF-35-like molecule 4 (228 aa).

Residues M1–P24 form the signal peptide. The Ig-like V-type domain occupies L25–Y126. The Extracellular segment spans residues L25–Y187. Cysteines 43 and 110 form a disulfide. N-linked (GlcNAc...) asparagine glycosylation occurs at N90. Residues P139 to A174 are disordered. The span at S154–D170 shows a compositional bias: polar residues. A helical transmembrane segment spans residues F188–W208. The Cytoplasmic segment spans residues V209–Q228.

Belongs to the CD300 family. Interacts with TYROBP, HCST and FcR gamma. Present on the surface of mast cells, dendritic cells, peritoneal macrophages and a subset of B-cells (at protein level).

It localises to the cell membrane. Functionally, acts as an activating receptor in mast cells and macrophages. This chain is CMRF-35-like molecule 4, found in Mus musculus (Mouse).